The primary structure comprises 630 residues: Polyphenol oxidase A, chloroplastic (630 aa).

The segment at 1–25 (MASLCSNSSSTSLKTPFTSSTTCLS) is disordered. Residues 1-87 (MASLCSNSSS…ANAIPLAASA (87 aa)) constitute a chloroplast transit peptide. 2 disulfide bridges follow: Cys-98/Cys-114 and Cys-113/Cys-181. The Cu cation site is built by His-180, His-198, His-207, His-328, His-332, and His-370. The segment at residues 184 to 198 (CNGGYSIDGKVLQVH) is a cross-link (2'-(S-cysteinyl)-histidine (Cys-His)).

The protein belongs to the tyrosinase family. Cu(2+) serves as cofactor.

The protein localises to the plastid. It localises to the chloroplast thylakoid lumen. It carries out the reaction 2 catechol + O2 = 2 1,2-benzoquinone + 2 H2O. Catalyzes the oxidation of mono- and o-diphenols to o-diquinones. This Solanum lycopersicum (Tomato) protein is Polyphenol oxidase A, chloroplastic.